A 352-amino-acid chain; its full sequence is Ribosomal RNA large subunit methyltransferase M (352 aa).

Residues S187, 218–221 (APGG), D237, D257, and D273 each bind S-adenosyl-L-methionine. K302 (proton acceptor) is an active-site residue.

This sequence belongs to the class I-like SAM-binding methyltransferase superfamily. RNA methyltransferase RlmE family. RlmM subfamily. As to quaternary structure, monomer.

It is found in the cytoplasm. The catalysed reaction is cytidine(2498) in 23S rRNA + S-adenosyl-L-methionine = 2'-O-methylcytidine(2498) in 23S rRNA + S-adenosyl-L-homocysteine + H(+). Functionally, catalyzes the 2'-O-methylation at nucleotide C2498 in 23S rRNA. The protein is Ribosomal RNA large subunit methyltransferase M of Methylococcus capsulatus (strain ATCC 33009 / NCIMB 11132 / Bath).